The following is a 426-amino-acid chain: Phosphomethylpyrimidine synthase (426 aa).

Substrate contacts are provided by residues asparagine 65, methionine 94, tyrosine 123, histidine 162, 184–186, 225–228, and glutamate 264; these read SRG and DGMR. Histidine 268 contacts Zn(2+). Tyrosine 291 lines the substrate pocket. Histidine 332 serves as a coordination point for Zn(2+). Residues cysteine 408, cysteine 411, and cysteine 415 each contribute to the [4Fe-4S] cluster site.

Belongs to the ThiC family. [4Fe-4S] cluster serves as cofactor.

The enzyme catalyses 5-amino-1-(5-phospho-beta-D-ribosyl)imidazole + S-adenosyl-L-methionine = 4-amino-2-methyl-5-(phosphooxymethyl)pyrimidine + CO + 5'-deoxyadenosine + formate + L-methionine + 3 H(+). The protein operates within cofactor biosynthesis; thiamine diphosphate biosynthesis. Catalyzes the synthesis of the hydroxymethylpyrimidine phosphate (HMP-P) moiety of thiamine from aminoimidazole ribotide (AIR) in a radical S-adenosyl-L-methionine (SAM)-dependent reaction. The protein is Phosphomethylpyrimidine synthase of Methanococcus aeolicus (strain ATCC BAA-1280 / DSM 17508 / OCM 812 / Nankai-3).